We begin with the raw amino-acid sequence, 124 residues long: Ribonuclease pancreatic (124 aa).

The disordered stretch occupies residues 1-23 (RESPAMKFQRQHMDSGNSPGNNP). The substrate site is built by K7 and R10. H12 acts as the Proton acceptor in catalysis. Polar residues predominate over residues 14 to 23 (DSGNSPGNNP). Intrachain disulfides connect C26–C84, C40–C95, C58–C110, and C65–C72. Substrate-binding positions include 41–45 (KPVNT) and K66. Residue N76 is glycosylated (N-linked (GlcNAc...) asparagine; partial). R85 lines the substrate pocket. Residue H119 is the Proton donor of the active site.

The protein belongs to the pancreatic ribonuclease family. In terms of assembly, monomer. Interacts with and forms tight 1:1 complexes with RNH1. Dimerization of two such complexes may occur. Interaction with RNH1 inhibits this protein. Pancreas.

It localises to the secreted. The enzyme catalyses an [RNA] containing cytidine + H2O = an [RNA]-3'-cytidine-3'-phosphate + a 5'-hydroxy-ribonucleotide-3'-[RNA].. It catalyses the reaction an [RNA] containing uridine + H2O = an [RNA]-3'-uridine-3'-phosphate + a 5'-hydroxy-ribonucleotide-3'-[RNA].. In terms of biological role, endonuclease that catalyzes the cleavage of RNA on the 3' side of pyrimidine nucleotides. Acts on single-stranded and double-stranded RNA. The sequence is that of Ribonuclease pancreatic (RNASE1) from Balaenoptera acutorostrata (Common minke whale).